Here is a 177-residue protein sequence, read N- to C-terminus: Large ribosomal subunit protein bL31m (177 aa).

Residues 1–14 (MLKSIFAKRFASTG) constitute a mitochondrion transit peptide. Positions 36–118 (KSRPAIYHQF…FSVDSTTPNS (83 aa)) are sufficient for general mitochondrial translation. Positions 87–177 (LVVVDANSGG…KLASKKRDKK (91 aa)) are sufficient for dosage suppression of COX2 mutation. The span at 111–123 (VDSTTPNSSSETV) shows a compositional bias: polar residues. Residues 111-144 (VDSTTPNSSSETVELSEENKKKTQIKKEEKEDVS) form a disordered region. Residues 127-144 (EENKKKTQIKKEEKEDVS) are compositionally biased toward basic and acidic residues.

It belongs to the bacterial ribosomal protein bL31 family. Highly divergent. In terms of assembly, component of the mitochondrial large ribosomal subunit (mt-LSU). Mature yeast 74S mitochondrial ribosomes consist of a small (37S) and a large (54S) subunit. The 37S small subunit contains a 15S ribosomal RNA (15S mt-rRNA) and 34 different proteins. The 54S large subunit contains a 21S rRNA (21S mt-rRNA) and 46 different proteins.

The protein resides in the mitochondrion. Functionally, component of the mitochondrial ribosome (mitoribosome), a dedicated translation machinery responsible for the synthesis of mitochondrial genome-encoded proteins, including at least some of the essential transmembrane subunits of the mitochondrial respiratory chain. The mitoribosomes are attached to the mitochondrial inner membrane and translation products are cotranslationally integrated into the membrane. Overexpression of bL31m suppresses mutations in the COX2 leader peptide-encoding and initiation codon regions. This Saccharomyces cerevisiae (strain ATCC 204508 / S288c) (Baker's yeast) protein is Large ribosomal subunit protein bL31m (MRPL36).